The following is a 353-amino-acid chain: Histidinol-phosphate aminotransferase (353 aa).

Lysine 211 carries the post-translational modification N6-(pyridoxal phosphate)lysine.

It belongs to the class-II pyridoxal-phosphate-dependent aminotransferase family. Histidinol-phosphate aminotransferase subfamily. In terms of assembly, homodimer. Requires pyridoxal 5'-phosphate as cofactor.

The enzyme catalyses L-histidinol phosphate + 2-oxoglutarate = 3-(imidazol-4-yl)-2-oxopropyl phosphate + L-glutamate. It functions in the pathway amino-acid biosynthesis; L-histidine biosynthesis; L-histidine from 5-phospho-alpha-D-ribose 1-diphosphate: step 7/9. The chain is Histidinol-phosphate aminotransferase from Marinomonas sp. (strain MWYL1).